Reading from the N-terminus, the 188-residue chain is MATYSSNEFRSGLKIMLDGEPCSIIESEFVKPGKGQAFVRTRIRKLISGKLLEKTFKSTDSVEGADVVDMNLIYLYNDGDFWHFMNNDTFEQLAADVKATGESAKWLVEQAECILTLWNGQPISVTPPNFVELQIVDTDPGLKGDTAGTGGKPATLTTGAVVKVPLFVQIGEIIKVDTRSGEYVSRVK.

An N6-(3,6-diaminohexanoyl)-5-hydroxylysine modification is found at Lys-34.

The protein belongs to the elongation factor P family. Post-translationally, may be beta-lysylated on the epsilon-amino group of Lys-34 by the combined action of EpmA and EpmB, and then hydroxylated on the C5 position of the same residue by EpmC (if this protein is present). Lysylation is critical for the stimulatory effect of EF-P on peptide-bond formation. The lysylation moiety may extend toward the peptidyltransferase center and stabilize the terminal 3-CCA end of the tRNA. Hydroxylation of the C5 position on Lys-34 may allow additional potential stabilizing hydrogen-bond interactions with the P-tRNA.

The protein resides in the cytoplasm. The protein operates within protein biosynthesis; polypeptide chain elongation. Functionally, involved in peptide bond synthesis. Alleviates ribosome stalling that occurs when 3 or more consecutive Pro residues or the sequence PPG is present in a protein, possibly by augmenting the peptidyl transferase activity of the ribosome. Modification of Lys-34 is required for alleviation. This Hamiltonella defensa subsp. Acyrthosiphon pisum (strain 5AT) protein is Elongation factor P.